The chain runs to 225 residues: MANINFGFEHHAKKLYSGAIEQGISNSLVPMVIETSGRGERAFDIFSRLLRERIIFLGTGIDEHVAGLIMAQLIFLESEDPERDIYIYINSPGGSVSAGLGIYDTMQYIRPEISTVCVGMAASMGAFLLASGNKGKRASLPHSRIMIHQPSGGAQGQETDIVIQAREIEKIRRLLEELLAKHTGQPVEKVREDSERDRWMNPQEALEYGLIDAIFEKRPTPEKKD.

S123 acts as the Nucleophile in catalysis. H148 is a catalytic residue.

This sequence belongs to the peptidase S14 family. Fourteen ClpP subunits assemble into 2 heptameric rings which stack back to back to give a disk-like structure with a central cavity, resembling the structure of eukaryotic proteasomes.

The protein resides in the cytoplasm. The enzyme catalyses Hydrolysis of proteins to small peptides in the presence of ATP and magnesium. alpha-casein is the usual test substrate. In the absence of ATP, only oligopeptides shorter than five residues are hydrolyzed (such as succinyl-Leu-Tyr-|-NHMec, and Leu-Tyr-Leu-|-Tyr-Trp, in which cleavage of the -Tyr-|-Leu- and -Tyr-|-Trp bonds also occurs).. Its function is as follows. Cleaves peptides in various proteins in a process that requires ATP hydrolysis. Has a chymotrypsin-like activity. Plays a major role in the degradation of misfolded proteins. This is ATP-dependent Clp protease proteolytic subunit from Chlorobium chlorochromatii (strain CaD3).